The primary structure comprises 833 residues: Neurogenic locus protein delta (833 aa).

The first 18 residues, 1–18 (MHWIKCLLTAFICFTVIV), serve as a signal peptide directing secretion. Topologically, residues 19 to 594 (QVHSSGSFEL…ARADGLTNAQ (576 aa)) are extracellular. Cystine bridges form between C46–C61 and C68–C82. 3 N-linked (GlcNAc...) asparagine glycosylation sites follow: N98, N137, and N167. The 45-residue stretch at 182–226 (VTCDLNYYGSGCAKFCRPRDDSFGHSTCSETGEIICLTGWQGDYC) folds into the DSL domain. Intrachain disulfides connect C184/C193, C197/C209, C217/C226, C231/C240, C235/C246, C248/C257, C260/C271, C266/C277, C279/C288, C295/C307, C301/C317, C319/C328, C335/C348, C342/C360, C362/C371, C378/C388, C383/C404, C406/C415, C422/C433, C427/C439, C441/C450, C457/C468, C462/C477, C479/C488, C495/C506, C500/C515, C517/C526, C533/C544, C538/C553, and C555/C564. 6 consecutive EGF-like domains span residues 227–258 (HIPKCAKGCEHGHCDKPNQCVCQLGWKGALCN), 256–289 (LCNECVLEPNCIHGTCNKPWTCICNEGWGGLYCN), 291–329 (DLNYCTNHRPCKNGGTCFNTGEGLYTCKCAPGYSGDDCE), 331–372 (EIYS…KMCE), 374–416 (KVLT…PNCD), and 418–451 (QLDNCSPNPCINGGSCQPSGKCICPAGFSGTRCE). One can recognise an EGF-like 7; calcium-binding domain in the interval 453–489 (NIDDCLGHQCENGGTCIDMVNQYRCQCVPGFHGTHCS). The region spanning 491–527 (KVDLCLIRPCANGGTCLNLNNDYQCTCRAGFTGKDCS) is the EGF-like 8 domain. The EGF-like 9; calcium-binding domain maps to 529–565 (DIDECSSGPCHNGGTCMNRVNSFECVCANGFRGKQCD). Residues 595-617 (VVLIAVFSVAMPLVAVIAACVVF) form a helical membrane-spanning segment. Residues 618-833 (CMKRKRKRAQ…RSVVCGTPHM (216 aa)) are Cytoplasmic-facing. T666 is modified (phosphothreonine). The tract at residues 743–773 (QLNTDPTLMHRGSPAGSSAKGASGGGPGAAE) is disordered. Over residues 754 to 763 (GSPAGSSAKG) the composition is skewed to low complexity.

In terms of assembly, interacts with Notch (N) via the EGF repeats and the N EGF repeats. In terms of processing, ubiquitinated by Mib, leading to its endocytosis and subsequent degradation. Detected in all areas with neurogenic abilities, for example the neurogenic ectoderm and the primordia of the sense organs. Later expression is restricted to those cells that have adopted a neural fate.

The protein resides in the membrane. Functionally, acts as a ligand for Notch (N) receptor. Essential for proper differentiation of ectoderm. Delta is required for the correct separation of neural and epidermal cell lineages. Fringe (fng) acts in the Golgi to determine the type of O-linked fucose on the EGF modules in N, altering the ability of N to bind with Delta. O-fut1 also has a role in modulating the interaction. In Drosophila melanogaster (Fruit fly), this protein is Neurogenic locus protein delta.